Reading from the N-terminus, the 425-residue chain is MASKEMFEDTVEERVINEEYKIWKKNTPFLYDLVMTHALQWPSLTVQWLPEVTKPEGKDYALHWLVLGTHTSDEQNHLVVARVHIPNDDAQFDASHCDSDKGEFGGFGSVTGKIECEIKINHEGEVNRARYMPQNPHIIATKTPSSDVLVFDYTKHPAKPDPSGECNPDLRLRGHQKEGYGLSWNSNLSGHLLSASDDHTVCLWDINAGPKEGKIVDAKAIFTGHSAVVEDVAWHLLHESLFGSVADDQKLMIWDTRSNTTSKPSHLVDAHTAEVNCLSFNPYSEFILATGSADKTVALWDLRNLKLKLHTFESHKDEIFQVHWSPHNETILASSGTDRRLNVWDLSKIGEEQSAEDAEDGPPELLFIHGGHTAKISDFSWNPNEPWVICSVSEDNIMQIWQMAENIYNDEESDVTASELEGQGS.

Residue A2 is modified to N-acetylalanine. Phosphoserine is present on S3. Position 4 is an N6-acetyllysine; alternate (K4). A Glycyl lysine isopeptide (Lys-Gly) (interchain with G-Cter in SUMO2); alternate cross-link involves residue K4. K4 is covalently cross-linked (Glycyl lysine isopeptide (Lys-Gly) (interchain with G-Cter in ubiquitin); alternate). T10 carries the phosphothreonine modification. WD repeat units lie at residues 47-122, 128-173, 181-217, 228-269, 275-312, 318-369, and 376-403; these read QWLP…KINH, RARY…LRLR, GLSW…KIVD, VVED…HLVD, VNCL…LHTF, EIFQ…LFIH, and ISDF…IWQM. A Phosphoserine modification is found at S95. A Glycyl lysine isopeptide (Lys-Gly) (interchain with G-Cter in SUMO2) cross-link involves residue K101. K119 carries the N6-acetyllysine modification. K155 participates in a covalent cross-link: Glycyl lysine isopeptide (Lys-Gly) (interchain with G-Cter in SUMO2). The residue at position 159 (K159) is an N6-acetyllysine; alternate. A Glycyl lysine isopeptide (Lys-Gly) (interchain with G-Cter in SUMO2); alternate cross-link involves residue K159. Position 354 is a phosphoserine (S354).

It belongs to the WD repeat RBAP46/RBAP48/MSI1 family. In terms of assembly, binds directly to helix 1 of the histone fold of histone H4, a region that is not accessible when H4 is in chromatin. Subunit of the type B histone acetyltransferase (HAT) complex, composed of RBBP7 and HAT1. Subunit of the core histone deacetylase (HDAC) complex, which is composed of HDAC1, HDAC2, RBBP4 and RBBP7. The core HDAC complex associates with SIN3A, ARID4B/SAP180, SAP18, SAP30, SAP130, SUDS3/SAP45 and possibly ARID4A/RBP1 and ING1 to form the SIN3 HDAC complex. Component of the nucleosome remodeling and deacetylase (NuRD) repressor complex, composed of core proteins MTA1, MTA2, MTA3, RBBP4, RBBP7, HDAC1, HDAC2, MBD2, MBD3, and peripherally associated proteins CDK2AP1, CDK2AP2, GATAD2A, GATAD2B, CHD3, CHD4 and CHD5. The exact stoichiometry of the NuRD complex is unknown, and some subunits such as MBD2 and MBD3, GATAD2A and GATAD2B, and CHD3, CHD4 and CHD5 define mutually exclusive NuRD complexes. The NuRD complex may interact with MBD3L1. The NuRD complex may interact with MBD3L2. Subunit of the PRC2/EED-EZH2 complex, which is composed of at least EED, EZH2, RBBP4, RBBP7 and SUZ12. The PRC2/EED-EZH2 complex may also associate with HDAC1. Component of the NURF-1 ISWI chromatin remodeling complex (also called the nucleosome-remodeling factor (NURF) complex) at least composed of SMARCA1, BPTF, RBBP4 and RBBP7. Within the complex interacts with SMARCA1. Component of the BPFT-SMARCA1 complex at least composed of SMARCA1, BPFT, RBBP4 and RBBP7; the complex is catalytically inactive and does not remodel chromatin. Within the complex interacts with SMARCA1. Interacts with BRCA1. Interacts with CDK2AP1. Interacts with CENPA. Interacts with CHD3. Interacts with CHD4. Interacts with CREBBP, and this interaction may be enhanced by the binding of phosphorylated CREB1 to CREBBP. Interacts with HDAC7. Interacts with MTA1. Interacts with PWWP2B. Interacts with RB1 (via viral protein-binding domain). Interacts with SUV39H1. Higher levels in brain, thymus, lung, spleen, kidney, testis, and ovary/uterus; lower levels in heart, liver, and muscle.

It is found in the nucleus. Functionally, core histone-binding subunit that may target chromatin remodeling factors, histone acetyltransferases and histone deacetylases to their histone substrates in a manner that is regulated by nucleosomal DNA. Component of several complexes which regulate chromatin metabolism. These include the type B histone acetyltransferase (HAT) complex, which is required for chromatin assembly following DNA replication; the core histone deacetylase (HDAC) complex, which promotes histone deacetylation and consequent transcriptional repression; the nucleosome remodeling and histone deacetylase complex (the NuRD complex), which promotes transcriptional repression by histone deacetylation and nucleosome remodeling; and the PRC2/EED-EZH2 complex, which promotes repression of homeotic genes during development; and the NURF (nucleosome remodeling factor) complex. The protein is Histone-binding protein RBBP7 (Rbbp7) of Mus musculus (Mouse).